The primary structure comprises 294 residues: Cytidine deaminase (294 aa).

CMP/dCMP-type deaminase domains follow at residues 48-168 and 186-294; these read DEDA…FGPK and LTGD…VLLA. 89–91 provides a ligand contact to substrate; sequence NME. Residue His102 participates in Zn(2+) binding. Glu104 serves as the catalytic Proton donor. Residues Cys129 and Cys132 each coordinate Zn(2+).

This sequence belongs to the cytidine and deoxycytidylate deaminase family. As to quaternary structure, homodimer. Zn(2+) is required as a cofactor.

It carries out the reaction cytidine + H2O + H(+) = uridine + NH4(+). It catalyses the reaction 2'-deoxycytidine + H2O + H(+) = 2'-deoxyuridine + NH4(+). Its function is as follows. This enzyme scavenges exogenous and endogenous cytidine and 2'-deoxycytidine for UMP synthesis. This is Cytidine deaminase from Escherichia coli O7:K1 (strain IAI39 / ExPEC).